Here is a 120-residue protein sequence, read N- to C-terminus: Large ribosomal subunit protein uL22 (120 aa).

This sequence belongs to the universal ribosomal protein uL22 family. As to quaternary structure, part of the 50S ribosomal subunit.

This protein binds specifically to 23S rRNA; its binding is stimulated by other ribosomal proteins, e.g. L4, L17, and L20. It is important during the early stages of 50S assembly. It makes multiple contacts with different domains of the 23S rRNA in the assembled 50S subunit and ribosome. Its function is as follows. The globular domain of the protein is located near the polypeptide exit tunnel on the outside of the subunit, while an extended beta-hairpin is found that lines the wall of the exit tunnel in the center of the 70S ribosome. The protein is Large ribosomal subunit protein uL22 of Corynebacterium kroppenstedtii (strain DSM 44385 / JCM 11950 / CIP 105744 / CCUG 35717).